Here is a 60-residue protein sequence, read N- to C-terminus: Metallothionein B (60 aa).

Positions 1-28 (MDPCDCSKSGTCNCGGSCTCTNCSCTTC) are beta. A divalent metal cation contacts are provided by Cys-4, Cys-6, Cys-12, Cys-14, Cys-18, Cys-20, Cys-23, Cys-25, Cys-28, Cys-32, Cys-33, Cys-35, Cys-36, Cys-40, Cys-43, Cys-47, Cys-49, Cys-54, Cys-58, and Cys-59. The segment at 29-60 (KKSCCPCCPSGCTKCASGCVCKGKTCDTSCCQ) is alpha.

This sequence belongs to the metallothionein superfamily. Type 1 family.

Metallothioneins have a high content of cysteine residues that bind various heavy metals. In Dicentrarchus labrax (European seabass), this protein is Metallothionein B (mtb).